The primary structure comprises 318 residues: tRNA uridine(34) hydroxylase (318 aa).

The region spanning 123–217 (EDDDTVIIDA…YGKDPETKGE (95 aa)) is the Rhodanese domain. Residue Cys-177 is the Cysteine persulfide intermediate of the active site.

It belongs to the TrhO family.

The catalysed reaction is uridine(34) in tRNA + AH2 + O2 = 5-hydroxyuridine(34) in tRNA + A + H2O. Functionally, catalyzes oxygen-dependent 5-hydroxyuridine (ho5U) modification at position 34 in tRNAs. This chain is tRNA uridine(34) hydroxylase, found in Staphylococcus aureus (strain MSSA476).